The primary structure comprises 116 residues: Large ribosomal subunit protein bL21c (116 aa).

Belongs to the bacterial ribosomal protein bL21 family. In terms of assembly, part of the 50S ribosomal subunit.

It is found in the plastid. The protein localises to the chloroplast. Functionally, this protein binds to 23S rRNA. The chain is Large ribosomal subunit protein bL21c from Marchantia polymorpha (Common liverwort).